Here is a 430-residue protein sequence, read N- to C-terminus: Adenylosuccinate synthetase (430 aa).

GTP is bound by residues 13–19 (GDEGKGK) and 41–43 (GHT). Asp14 functions as the Proton acceptor in the catalytic mechanism. The Mg(2+) site is built by Asp14 and Gly41. IMP is bound by residues 14 to 17 (DEGK), 39 to 42 (NAGH), Thr130, Arg144, Gln225, Thr240, and Arg304. Residue His42 is the Proton donor of the active site. 300–306 (STTGRAR) is a substrate binding site. Residues Arg306, 332-334 (KLD), and 414-416 (STG) each bind GTP.

This sequence belongs to the adenylosuccinate synthetase family. In terms of assembly, homodimer. Mg(2+) is required as a cofactor.

It localises to the cytoplasm. The catalysed reaction is IMP + L-aspartate + GTP = N(6)-(1,2-dicarboxyethyl)-AMP + GDP + phosphate + 2 H(+). It participates in purine metabolism; AMP biosynthesis via de novo pathway; AMP from IMP: step 1/2. Plays an important role in the de novo pathway of purine nucleotide biosynthesis. Catalyzes the first committed step in the biosynthesis of AMP from IMP. This Azotobacter vinelandii (strain DJ / ATCC BAA-1303) protein is Adenylosuccinate synthetase.